We begin with the raw amino-acid sequence, 292 residues long: 11-beta-hydroxysteroid dehydrogenase 1 (292 aa).

A helical membrane pass occupies residues 7-24; it reads YLLPILGIFLAYYYYSAN.

It belongs to the short-chain dehydrogenases/reductases (SDR) family. Homodimer. In terms of tissue distribution, expressed highest in liver and ovaries (corpora lutea, granulosa cells, thecal, uterine caruncle and intercarunculer tissues), lower expression in kidney and spleen, and lowest in the adrenal.

It is found in the endoplasmic reticulum membrane. It catalyses the reaction an 11beta-hydroxysteroid + NADP(+) = an 11-oxosteroid + NADPH + H(+). It carries out the reaction corticosterone + NADP(+) = 11-dehydrocorticosterone + NADPH + H(+). The catalysed reaction is cortisone + NADPH + H(+) = cortisol + NADP(+). The enzyme catalyses a 7beta-hydroxysteroid + NADP(+) = a 7-oxosteroid + NADPH + H(+). It catalyses the reaction 7-oxocholesterol + NADPH + H(+) = 7beta-hydroxycholesterol + NADP(+). It carries out the reaction chenodeoxycholate + NADP(+) = 7-oxolithocholate + NADPH + H(+). The catalysed reaction is 7-oxolithocholate + NADPH + H(+) = ursodeoxycholate + NADP(+). The enzyme catalyses glycochenodeoxycholate + NADP(+) = 7-oxoglycolithocholate + NADPH + H(+). It catalyses the reaction taurochenodeoxycholate + NADP(+) = 7-oxotaurolithocholate + NADPH + H(+). It carries out the reaction tauroursodeoxycholate + NADP(+) = 7-oxotaurolithocholate + NADPH + H(+). The catalysed reaction is glycoursodeoxycholate + NADP(+) = 7-oxoglycolithocholate + NADPH + H(+). The enzyme catalyses 7-oxopregnenolone + NADPH + H(+) = 7beta-hydroxypregnenolone + NADP(+). It catalyses the reaction 3beta,7alpha-dihydroxyandrost-5-en-17-one + NADP(+) = 3beta-hydroxy-5-androstene-7,17-dione + NADPH + H(+). It carries out the reaction 3beta-hydroxy-5-androstene-7,17-dione + NADPH + H(+) = 3beta,7beta-dihydroxyandrost-5-en-17-one + NADP(+). The catalysed reaction is 3beta-hydroxy-5alpha-androstane-7,17-dione + NADPH + H(+) = 3beta,7beta-dihydroxy-5alpha-androstan-17-one + NADP(+). Its function is as follows. Controls the reversible conversion of biologically active glucocorticoids such as cortisone to cortisol, and 11-dehydrocorticosterone to corticosterone in the presence of NADP(H). Participates in the corticosteroid receptor-mediated anti-inflammatory response, as well as metabolic and homeostatic processes. Plays a role in the secretion of aqueous humor in the eye, maintaining a normotensive, intraocular environment. Bidirectional in vitro, predominantly functions as a reductase in vivo, thereby increasing the concentration of active glucocorticoids. It has broad substrate specificity, besides glucocorticoids, it accepts other steroid and sterol substrates. Interconverts 7-oxo- and 7-hydroxy-neurosteroids such as 7-oxopregnenolone and 7beta-hydroxypregnenolone, 7-oxodehydroepiandrosterone (3beta-hydroxy-5-androstene-7,17-dione) and 7beta-hydroxydehydroepiandrosterone (3beta,7beta-dihydroxyandrost-5-en-17-one), among others. Catalyzes the stereo-specific conversion of the major dietary oxysterol, 7-ketocholesterol (7-oxocholesterol), into the more polar 7-beta-hydroxycholesterol metabolite. 7-oxocholesterol is one of the most important oxysterols, it participates in several events such as induction of apoptosis, accumulation in atherosclerotic lesions, lipid peroxidation, and induction of foam cell formation. Mediates the 7-oxo reduction of 7-oxolithocholate mainly to chenodeoxycholate, and to a lesser extent to ursodeoxycholate, both in its free form and when conjugated to glycine or taurine, providing a link between glucocorticoid activation and bile acid metabolism. Catalyzes the synthesis of 7-beta-25-dihydroxycholesterol from 7-oxo-25-hydroxycholesterol in vitro, which acts as a ligand for the G-protein-coupled receptor (GPCR) Epstein-Barr virus-induced gene 2 (EBI2) and may thereby regulate immune cell migration. The protein is 11-beta-hydroxysteroid dehydrogenase 1 of Bos taurus (Bovine).